Here is a 216-residue protein sequence, read N- to C-terminus: Redox-sensing transcriptional repressor Rex (216 aa).

The H-T-H motif DNA-binding region spans 20–59 (QYYRLFKSLVEENVTRTNSQLISEKIGVDAATIRRDFSLF). Position 94-99 (94-99 (GVGNLG)) interacts with NAD(+).

It belongs to the transcriptional regulatory Rex family. Homodimer.

The protein resides in the cytoplasm. Functionally, modulates transcription in response to changes in cellular NADH/NAD(+) redox state. This Lactococcus lactis subsp. lactis (strain IL1403) (Streptococcus lactis) protein is Redox-sensing transcriptional repressor Rex.